The chain runs to 147 residues: Hemoglobin subunit epsilon (147 aa).

Residues His-3 to His-147 enclose the Globin domain. Position 51 is a phosphoserine (Ser-51). Heme b is bound by residues His-64 and His-93.

It belongs to the globin family. Red blood cells.

In terms of biological role, hemoglobin epsilon chain is a beta-type chain found in early embryos. The sequence is that of Hemoglobin subunit epsilon (HBE1) from Sus scrofa (Pig).